The chain runs to 83 residues: NAD(P)H-quinone oxidoreductase subunit L, organellar chromatophore (83 aa).

2 consecutive transmembrane segments (helical) span residues 17–37 and 53–73; these read LLLAYGVLGGLYLILVPLALY and LFVYGLVFLFFPGLILLSPFL.

This sequence belongs to the complex I NdhL subunit family. As to quaternary structure, NDH-1 can be composed of about 15 different subunits; different subcomplexes with different compositions have been identified which probably have different functions.

The protein resides in the plastid. The protein localises to the organellar chromatophore thylakoid membrane. The catalysed reaction is a plastoquinone + NADH + (n+1) H(+)(in) = a plastoquinol + NAD(+) + n H(+)(out). The enzyme catalyses a plastoquinone + NADPH + (n+1) H(+)(in) = a plastoquinol + NADP(+) + n H(+)(out). NDH-1 shuttles electrons from an unknown electron donor, via FMN and iron-sulfur (Fe-S) centers, to quinones in the respiratory and/or the photosynthetic chain. The immediate electron acceptor for the enzyme in this species is believed to be plastoquinone. Couples the redox reaction to proton translocation, and thus conserves the redox energy in a proton gradient. This is NAD(P)H-quinone oxidoreductase subunit L, organellar chromatophore from Paulinella chromatophora.